Reading from the N-terminus, the 500-residue chain is Beta-glucosidase 30 (500 aa).

A signal peptide spans 1-25 (MGIRMGRRLLFTLFLGALFCNGVYA). Q46 provides a ligand contact to a beta-D-glucoside. Residues N63 and N114 are each glycosylated (N-linked (GlcNAc...) asparagine). A beta-D-glucoside-binding positions include H149 and 194–195 (NE). E195 acts as the Proton donor in catalysis. A disulfide bridge connects residues C214 and C222. Y338 is a binding site for a beta-D-glucoside. N363 is a glycosylation site (N-linked (GlcNAc...) asparagine). E409 is a binding site for a beta-D-glucoside. E409 (nucleophile) is an active-site residue. Residues N416 and N417 are each glycosylated (N-linked (GlcNAc...) asparagine). Residues W456, 463–464 (EW), and F472 contribute to the a beta-D-glucoside site.

The protein belongs to the glycosyl hydrolase 1 family.

The catalysed reaction is Hydrolysis of terminal, non-reducing beta-D-glucosyl residues with release of beta-D-glucose.. In Oryza sativa subsp. japonica (Rice), this protein is Beta-glucosidase 30 (BGLU30).